The chain runs to 899 residues: Alanine--tRNA ligase (899 aa).

The Zn(2+) site is built by histidine 595, histidine 599, cysteine 703, and histidine 707.

This sequence belongs to the class-II aminoacyl-tRNA synthetase family. Zn(2+) is required as a cofactor.

The protein localises to the cytoplasm. The enzyme catalyses tRNA(Ala) + L-alanine + ATP = L-alanyl-tRNA(Ala) + AMP + diphosphate. In terms of biological role, catalyzes the attachment of alanine to tRNA(Ala) in a two-step reaction: alanine is first activated by ATP to form Ala-AMP and then transferred to the acceptor end of tRNA(Ala). Also edits incorrectly charged Ser-tRNA(Ala) and Gly-tRNA(Ala) via its editing domain. This Caldivirga maquilingensis (strain ATCC 700844 / DSM 13496 / JCM 10307 / IC-167) protein is Alanine--tRNA ligase.